The sequence spans 141 residues: Hemoglobin subunit alpha (141 aa).

The 141-residue stretch at 1–141 folds into the Globin domain; sequence VLSPADKANI…VSTVLTSKYR (141 aa). Serine 3 is subject to Phosphoserine. N6-succinyllysine is present on residues lysine 7 and lysine 11. Lysine 16 carries the N6-acetyllysine; alternate modification. At lysine 16 the chain carries N6-succinyllysine; alternate. Phosphotyrosine is present on tyrosine 24. Phosphoserine is present on serine 35. An N6-succinyllysine modification is found at lysine 40. Serine 49 carries the post-translational modification Phosphoserine. Residue histidine 58 coordinates O2. Residue histidine 87 participates in heme b binding. Position 102 is a phosphoserine (serine 102). Residue threonine 108 is modified to Phosphothreonine. A phosphoserine mark is found at serine 124 and serine 131. Phosphothreonine occurs at positions 134 and 137. Phosphoserine is present on serine 138.

It belongs to the globin family. In terms of assembly, heterotetramer of two alpha chains and two beta chains. Red blood cells.

Functionally, involved in oxygen transport from the lung to the various peripheral tissues. In terms of biological role, hemopressin acts as an antagonist peptide of the cannabinoid receptor CNR1. Hemopressin-binding efficiently blocks cannabinoid receptor CNR1 and subsequent signaling. In Meles meles (Eurasian badger), this protein is Hemoglobin subunit alpha (HBA).